Here is a 617-residue protein sequence, read N- to C-terminus: MALLQIAEPGQSSAPHEHKLAAGIDLGTTNSLVASVRSGDAKTLTDDQGRSILPSVVNYAQDTALVGYEAKAKAEQEPENTIISVKRLIGRSLKDIQARYPSLPYQFKESDNGLPILQTAQGDKNPIEVSADILKSLGKRAEETLGGELAGVVITVPAYFDDAQRAGTKDAAKLAGLHVLRLLNEPTAAAIAYGLDSGQEGVIAVYDLGGGTFDISILRLSKGVFEVLATGGDSALGGDDFDHLLADYLMEQAGLEAPLSAEKNRALLNIATATKIAFSEQDCVDVDVFGWKGAVTREQFEELIRPLVKKTLMSCRRALKDADVDAEDVLEAVMVGGSTRTLLVREMVGEFFGRTPLTSINPDEVVAIGAGIQADILAGNKPDSEMLLLDVIPLSLGIETMGGLVEKIIPRNTTIPVARAQEFTTFKDGQTAMSVHTVQGEREMVDDCRSLARFSLKGIPPMVAGAAHIRVTYQVDADGLLSVTAMEKSTGVQAEIQVKPSYGLSDDEVANMLRDSMTYAKEDMQARALAEQRVEADRVIEGLIAAMQADGDELLSDQEKQDLVKVIEALIELRNGEDADAIEQGIKDTDKASQDFASRRMDKSIRAALSGQSVNDI.

It belongs to the heat shock protein 70 family.

Functionally, chaperone involved in the maturation of iron-sulfur cluster-containing proteins. Has a low intrinsic ATPase activity which is markedly stimulated by HscB. This Vibrio campbellii (strain ATCC BAA-1116) protein is Chaperone protein HscA homolog.